A 471-amino-acid chain; its full sequence is 5-hydroxytryptamine receptor 2A (471 aa).

The Extracellular segment spans residues 1-80; it reads MEILCEDNIS…LQEKNWSALL (80 aa). N-linked (GlcNAc...) asparagine glycosylation is found at asparagine 8, asparagine 38, asparagine 44, asparagine 51, and asparagine 54. The helical transmembrane segment at 81-97 threads the bilayer; sequence TTVVIILTIAGNILVIM. The Cytoplasmic segment spans residues 98–111; sequence AVSLEKKLQNATNY. Residues 112–137 traverse the membrane as a helical segment; the sequence is FLMSLAIADMLLGFLVMPVSMLTILY. Topologically, residues 138-146 are extracellular; the sequence is GYRWPLPSK. The chain crosses the membrane as a helical span at residues 147 to 171; the sequence is LCAVWIYLDVLFSTASIMHLCAISL. Cysteine 148 and cysteine 227 are oxidised to a cystine. Aspartate 155 is a binding site for serotonin. A DRY motif; important for ligand-induced conformation changes motif is present at residues 172–174; the sequence is DRY. At 172–191 the chain is on the cytoplasmic side; the sequence is DRYVAIQNPIHHSRFNSRTK. Residues 192–215 traverse the membrane as a helical segment; sequence AFLKIIAVWTISVGISMPIPVFGL. At 216–232 the chain is on the extracellular side; sequence QDDSKVFKEGSCLLADD. Residues 233-258 traverse the membrane as a helical segment; that stretch reads NFVLIGSFVAFFIPLTIMVITYFLTI. Topologically, residues 259-322 are cytoplasmic; the sequence is KSLQKEATLC…QSISNEQKAC (64 aa). Serine 280 carries the phosphoserine modification. The helical transmembrane segment at 323–348 threads the bilayer; sequence KVLGIVFFLFVVMWCPFFITNIMAVI. Asparagine 343 contacts serotonin. Cysteine 349 and cysteine 353 are disulfide-bonded. At 349–356 the chain is on the extracellular side; it reads CKESCNEN. A helical membrane pass occupies residues 357–382; the sequence is VIGALLNVFVWIGYLSSAVNPLVYTL. The NPxxY motif; important for ligand-induced conformation changes and signaling signature appears at 376-380; it reads NPLVY. The Cytoplasmic portion of the chain corresponds to 383-471; that stretch reads FNKTYRSAFS…ETVNEKVSCV (89 aa). The PDZ-binding motif lies at 469-471; the sequence is SCV.

Belongs to the G-protein coupled receptor 1 family. Interacts (via C-terminus) with MPDZ and PATJ. May interact (via C-terminus) with MPP3, PRDX6, DLG4, DLG1, CASK, APBA1 and MAGI2. Interacts with GRM2 and DRD2; this may affect signaling. In terms of tissue distribution, detected in neurons in brain cortex. Detected in adult intestine, especially in mucosal epithelium, longitudinal and circular layers of muscularis externa and myenteric plexuses. Highly expressed in Paneth cells, and detected at lower levels in enterocytes (at protein level). Detected in neurons in the brain cortex.

It is found in the cell membrane. The protein resides in the cell projection. The protein localises to the dendrite. Its subcellular location is the axon. It localises to the cytoplasmic vesicle. It is found in the membrane. The protein resides in the caveola. The protein localises to the presynapse. With respect to regulation, G-protein coupled receptor activity is regulated by lipids: oleamide increases HTR2A-mediated activity. G-protein coupled receptor for 5-hydroxytryptamine (serotonin). Also functions as a receptor for various drugs and psychoactive substances, including mescaline, psilocybin, 1-(2,5-dimethoxy-4-iodophenyl)-2-aminopropane (DOI) and lysergic acid diethylamide (LSD). Ligand binding causes a conformation change that triggers signaling via guanine nucleotide-binding proteins (G proteins) and modulates the activity of downstream effectors. HTR2A is coupled to G(q)/G(11) G alpha proteins and activates phospholipase C-beta, releasing diacylglycerol (DAG) and inositol 1,4,5-trisphosphate (IP3) second messengers that modulate the activity of phosphatidylinositol 3-kinase and promote the release of Ca(2+) ions from intracellular stores, respectively. Beta-arrestin family members inhibit signaling via G proteins and mediate activation of alternative signaling pathways. Affects neural activity, perception, cognition and mood. Plays a role in the regulation of behavior, including responses to anxiogenic situations and psychoactive substances. Plays a role in intestinal smooth muscle contraction, and may play a role in arterial vasoconstriction. In Mus musculus (Mouse), this protein is 5-hydroxytryptamine receptor 2A (Htr2a).